Consider the following 921-residue polypeptide: Dual serine/threonine and tyrosine protein kinase (921 aa).

The Protein kinase domain maps to 645 to 899 (PKLGRELGRG…PLLGIVEPSL (255 aa)). ATP contacts are provided by residues 651 to 659 (LGRGQYGVV) and Lys-674. The active-site Proton acceptor is Asp-770.

It belongs to the protein kinase superfamily. Ser/Thr protein kinase family.

Its subcellular location is the cytoplasm. The protein resides in the cell membrane. It localises to the apical cell membrane. The protein localises to the basolateral cell membrane. It is found in the cell junction. The enzyme catalyses L-seryl-[protein] + ATP = O-phospho-L-seryl-[protein] + ADP + H(+). It carries out the reaction L-threonyl-[protein] + ATP = O-phospho-L-threonyl-[protein] + ADP + H(+). The catalysed reaction is L-tyrosyl-[protein] + ATP = O-phospho-L-tyrosyl-[protein] + ADP + H(+). Its function is as follows. May act as a positive regulator of ERK phosphorylation downstream of fibroblast growth factor-receptor activation. May induce both caspase-dependent apoptosis and caspase-independent cell death. May play a role in the embryonic development. In Takifugu rubripes (Japanese pufferfish), this protein is Dual serine/threonine and tyrosine protein kinase (dstyk).